The primary structure comprises 138 residues: Basic phospholipase A2 ammodytoxin C (138 aa).

The signal sequence occupies residues 1-16; it reads MRTLWIVAVCLIGVEG. Disulfide bonds link Cys42–Cys131, Cys44–Cys60, Cys59–Cys111, Cys65–Cys138, Cys66–Cys104, Cys73–Cys97, and Cys91–Cys102. 3 residues coordinate Ca(2+): Tyr43, Gly45, and Gly47. Residue His63 is part of the active site. Asp64 contacts Ca(2+). The active site involves Asp105.

This sequence belongs to the phospholipase A2 family. Group II subfamily. D49 sub-subfamily. As to quaternary structure, monomer. Binds to calmodulin, coagulation factor X (F10), 14-3-3 proteins gamma (YWHAG) and epsilon (YWHAE), and R25, a mitochondrial membrane protein. May bind to M-type PLA2 receptor (R-180). Ca(2+) is required as a cofactor. As to expression, expressed by the venom gland.

The protein resides in the secreted. It localises to the host cytoplasm. Its subcellular location is the host cytosol. The enzyme catalyses a 1,2-diacyl-sn-glycero-3-phosphocholine + H2O = a 1-acyl-sn-glycero-3-phosphocholine + a fatty acid + H(+). Its function is as follows. Snake venom phospholipase A2 (PLA2) that acts as a presynaptic neurotoxin, an inhibitor of blood coagulation, and has been found to bind with high affinity to intracellular proteins. The response of indirectly stimulated neuromuscular preparations to ammodytoxin (Atx) is triphasic. The first phase, the transient inhibition of the acetylcholine (ACh) release, starts soon after the addition of Atx and lasts for several minutes. This phase is probably independent of Atx enzymatic activity. The effect may be due to the specific binding of the toxin to presynaptic receptors. These receptors, called N-type receptors, are still unidentified. It is noteworthy that a neuronal isoform of the M-type PLA2 receptor (R180) has been identified as a high-affinity receptor for Atx in neuronal plasma membranes. It was demonstrated however that this receptor is not essential for expression of neurotoxicity by Atx. The second phase corresponds to an augmentation of neurotransmitter release. A peak is reached 10-20 minutes after exposure of the preparation to Atx and is followed by a gradual reduction. In this phase, the enzymatic activity of Atx of the mammalian is not significant. It is speculated that the increased release of neurotransmitter in this phase is induced by the interference of Atx with voltage-gated potassium channels. Measurements of ionic showed however that voltage-gated potassium channels are not affected by Atx. The third phase of the response of neuromuscular preparations to Atx, which corresponds to a complete and irreversible paralysis, is clearly dependent on the hydrolytic activity of the toxin. In addition to its presynaptic neurotoxicity, Atx shows an anticoagulant activity by binding with high affinity to activated coagulation factor X (F10) thus inhibiting the formation of the prothrombinase complex (FX/FV) and its activity (IC(50) is 240 nM). Surprisingly, Atx was discovered to bind intracellular proteins such as calmodulin (CaM), 14-3-3 proteins gamma (YWHAG) and epsilon (YWHAE), as well as R25, a mitochondrial integral membrane protein found in cerebral cortex. These findings raised a doubt about the dogma of the exclusively extracellular action of PLA2s, defended by the potential instability of these molecules in the reducing environment of the eukaryotic cytosol coupled with their possible inability to act as enzymes in this cellular compartment, due to too low concentration of calcium ions. This hypothesis was challenged efficiently by demonstrating the internalization of AtxA into a culture cells, but still remains to be directly demonstrated in vivo. PLA2 catalyzes the calcium-dependent hydrolysis of the 2-acyl groups in 3-sn-phosphoglycerides. This Vipera ammodytes ammodytes (Western sand viper) protein is Basic phospholipase A2 ammodytoxin C.